A 249-amino-acid polypeptide reads, in one-letter code: DNA repair protein RecO (249 aa).

Belongs to the RecO family.

Involved in DNA repair and RecF pathway recombination. This is DNA repair protein RecO from Exiguobacterium sibiricum (strain DSM 17290 / CCUG 55495 / CIP 109462 / JCM 13490 / 255-15).